Reading from the N-terminus, the 460-residue chain is Glutamyl-tRNA reductase (460 aa).

Substrate is bound by residues 48–51 (TCNR), Ser100, 105–107 (EDQ), and Gln111. Residue Cys49 is the Nucleophile of the active site. 180–185 (GAGEIG) serves as a coordination point for NADP(+).

The protein belongs to the glutamyl-tRNA reductase family. As to quaternary structure, homodimer.

It catalyses the reaction (S)-4-amino-5-oxopentanoate + tRNA(Glu) + NADP(+) = L-glutamyl-tRNA(Glu) + NADPH + H(+). It participates in porphyrin-containing compound metabolism; protoporphyrin-IX biosynthesis; 5-aminolevulinate from L-glutamyl-tRNA(Glu): step 1/2. Functionally, catalyzes the NADPH-dependent reduction of glutamyl-tRNA(Glu) to glutamate 1-semialdehyde (GSA). The protein is Glutamyl-tRNA reductase of Methanosarcina acetivorans (strain ATCC 35395 / DSM 2834 / JCM 12185 / C2A).